Reading from the N-terminus, the 213-residue chain is Golgi apparatus membrane protein TVP23 homolog A (213 aa).

A run of 4 helical transmembrane segments spans residues 32-52 (PLAT…YVSC), 54-74 (WFSK…SLDF), 123-143 (IFWL…FSTL), and 150-170 (WLAL…GYIL).

The protein belongs to the TVP23 family.

It localises to the membrane. The protein is Golgi apparatus membrane protein TVP23 homolog A (TVP23A) of Homo sapiens (Human).